The following is a 180-amino-acid chain: Crossover junction endodeoxyribonuclease RuvC (180 aa).

Catalysis depends on residues aspartate 7, glutamate 66, and aspartate 138. The Mg(2+) site is built by aspartate 7, glutamate 66, and aspartate 138.

It belongs to the RuvC family. Homodimer which binds Holliday junction (HJ) DNA. The HJ becomes 2-fold symmetrical on binding to RuvC with unstacked arms; it has a different conformation from HJ DNA in complex with RuvA. In the full resolvosome a probable DNA-RuvA(4)-RuvB(12)-RuvC(2) complex forms which resolves the HJ. It depends on Mg(2+) as a cofactor.

It is found in the cytoplasm. The catalysed reaction is Endonucleolytic cleavage at a junction such as a reciprocal single-stranded crossover between two homologous DNA duplexes (Holliday junction).. Its function is as follows. The RuvA-RuvB-RuvC complex processes Holliday junction (HJ) DNA during genetic recombination and DNA repair. Endonuclease that resolves HJ intermediates. Cleaves cruciform DNA by making single-stranded nicks across the HJ at symmetrical positions within the homologous arms, yielding a 5'-phosphate and a 3'-hydroxyl group; requires a central core of homology in the junction. The consensus cleavage sequence is 5'-(A/T)TT(C/G)-3'. Cleavage occurs on the 3'-side of the TT dinucleotide at the point of strand exchange. HJ branch migration catalyzed by RuvA-RuvB allows RuvC to scan DNA until it finds its consensus sequence, where it cleaves and resolves the cruciform DNA. The chain is Crossover junction endodeoxyribonuclease RuvC from Burkholderia orbicola (strain AU 1054).